A 349-amino-acid chain; its full sequence is Green-sensitive opsin-1 (349 aa).

Residues 1 to 36 (MNGTEGKNFYVPMSNRTGLVRSPFEYPQYYLAEPWQ) lie on the Extracellular side of the membrane. Residues Asn2 and Asn15 are each glycosylated (N-linked (GlcNAc...) asparagine). Residues 37-61 (FKILALYLFFLMSMGLPINGLTLVV) traverse the membrane as a helical segment. Topologically, residues 62–73 (TAQHKKLRQPLN) are cytoplasmic. Residues 74-99 (FILVNLAVAGTIMVCFGFTVTFYTAI) traverse the membrane as a helical segment. Over 100–113 (NGYFVLGPTGCAVE) the chain is Extracellular. Cys110 and Cys187 form a disulfide bridge. Residues 114–133 (GFMATLGGEVALWSLVVLAI) form a helical membrane-spanning segment. At 134–152 (ERYIVVCKPMGSFKFSSSH) the chain is on the cytoplasmic side. The chain crosses the membrane as a helical span at residues 153-176 (AFAGIAFTWVMALACAAPPLFGWS). Residues 177 to 202 (RYIPEGMQCSCGPDYYTLNPDYNNES) lie on the Extracellular side of the membrane. A helical transmembrane segment spans residues 203–230 (YVIYMFVCHFILPVAVIFFTYGRLVCTV). Over 231–252 (KAAAAQQQDSASTQKAEREVTK) the chain is Cytoplasmic. A helical membrane pass occupies residues 253–276 (MVILMVFGFLIAWTPYATVAAWIF). Residues 277–284 (FNKGADFS) lie on the Extracellular side of the membrane. The helical transmembrane segment at 285–309 (AKFMAIPAFFSKSSALYNPVIYVLL) threads the bilayer. N6-(retinylidene)lysine is present on Lys296. Residues 310 to 349 (NKQFRNCMLTTIFCGKNPLGDDESSTVSTSKTEVSSVSPA) lie on the Cytoplasmic side of the membrane. Positions 329 to 349 (GDDESSTVSTSKTEVSSVSPA) are disordered. Low complexity predominate over residues 334 to 349 (STVSTSKTEVSSVSPA).

It belongs to the G-protein coupled receptor 1 family. Opsin subfamily. Post-translationally, phosphorylated on some or all of the serine and threonine residues present in the C-terminal region. In terms of tissue distribution, the color pigments are found in the cone photoreceptor cells.

The protein resides in the membrane. In terms of biological role, visual pigments are the light-absorbing molecules that mediate vision. They consist of an apoprotein, opsin, covalently linked to cis-retinal. The polypeptide is Green-sensitive opsin-1 (Carassius auratus (Goldfish)).